Consider the following 192-residue polypeptide: Inosine triphosphate pyrophosphatase (192 aa).

Residue 8-13 participates in ITP binding; it reads TTNLKK. Glu34 contributes to the Mg(2+) binding site. ITP contacts are provided by residues Lys46, 64 to 65, Lys81, 141 to 144, Lys164, and 169 to 170; these read DT, EGFD, and HR.

The protein belongs to the HAM1 NTPase family. Homodimer. Mg(2+) serves as cofactor. It depends on Mn(2+) as a cofactor.

The protein localises to the cytoplasm. The protein resides in the nucleus. It catalyses the reaction ITP + H2O = IMP + diphosphate + H(+). It carries out the reaction dITP + H2O = dIMP + diphosphate + H(+). The catalysed reaction is XTP + H2O = XMP + diphosphate + H(+). Functionally, pyrophosphatase that hydrolyzes non-canonical purine nucleotides such as inosine triphosphate (ITP), deoxyinosine triphosphate (dITP) or xanthosine 5'-triphosphate (XTP) to their respective monophosphate derivatives. The enzyme does not distinguish between the deoxy- and ribose forms. Probably excludes non-canonical purines from RNA and DNA precursor pools, thus preventing their incorporation into RNA and DNA and avoiding chromosomal lesions. The sequence is that of Inosine triphosphate pyrophosphatase from Encephalitozoon cuniculi (strain GB-M1) (Microsporidian parasite).